Consider the following 862-residue polypeptide: Phosphofurin acidic cluster sorting protein 2 (862 aa).

Disordered regions lie at residues 151–215 (HEDS…TTSM), 263–436 (LDVE…TRSQ), and 658–713 (SSAT…SQGV). Residues 263 to 272 (LDVENPSDSG) show a composition bias toward low complexity. The segment covering 313–328 (SHREPPSPADVPEKTR) has biased composition (basic and acidic residues). The span at 332–344 (GKQQLSDSVSDTV) shows a compositional bias: polar residues. Phosphoserine occurs at positions 361, 387, 424, 662, and 665. Low complexity-rich tracts occupy residues 658–693 (SSATSGDSDDAAPSSSSILSSTPPSASTSPAAKEAS) and 700–710 (PSVSGGLSSPS).

The protein belongs to the PACS family. In terms of assembly, interacts with BID and PKD2. Interacts with SIRT1. Interacts with HDAC1. Interacts with TRPV1. Interacts with WDR37.

The protein resides in the endoplasmic reticulum. It is found in the mitochondrion. Multifunctional sorting protein that controls the endoplasmic reticulum (ER)-mitochondria communication, including the apposition of mitochondria with the ER and ER homeostasis. In addition, in response to apoptotic inducer, translocates BIB to mitochondria, which initiates a sequence of events including the formation of mitochondrial truncated BID, the release of cytochrome c, the activation of caspase-3 thereby causing cell death. May also involved in ion channel trafficking, directing acidic cluster-containing ion channels to distinct subcellular compartments. The chain is Phosphofurin acidic cluster sorting protein 2 (Pacs2) from Mus musculus (Mouse).